A 362-amino-acid chain; its full sequence is Serpentine receptor class epsilon-37 (362 aa).

A run of 7 helical transmembrane segments spans residues 29–49, 67–87, 127–147, 170–190, 204–224, 260–280, and 288–308; these read IFYV…YILV, IMMC…IVLI, IYFA…AVLA, IPIL…YQTT, IFIG…NLAW, LVVS…VLLF, and FFVH…SLTL.

The protein belongs to the nematode receptor-like protein sre family.

It is found in the membrane. The protein is Serpentine receptor class epsilon-37 (sre-37) of Caenorhabditis elegans.